A 179-amino-acid chain; its full sequence is Large ribosomal subunit protein uL6 (179 aa).

This sequence belongs to the universal ribosomal protein uL6 family. Part of the 50S ribosomal subunit.

In terms of biological role, this protein binds to the 23S rRNA, and is important in its secondary structure. It is located near the subunit interface in the base of the L7/L12 stalk, and near the tRNA binding site of the peptidyltransferase center. This is Large ribosomal subunit protein uL6 from Synechococcus elongatus (strain ATCC 33912 / PCC 7942 / FACHB-805) (Anacystis nidulans R2).